We begin with the raw amino-acid sequence, 122 residues long: Probable non-specific lipid-transfer protein 3 (122 aa).

The N-terminal stretch at M1–A29 is a signal peptide. Cystine bridges form between C33–C81, C43–C58, C59–C104, and C79–C118.

This sequence belongs to the plant LTP family. Expressed in phloem. Also detected in the epidermis near the vascular tissues in resistant plants infected by Hessian fly larvae.

Its function is as follows. Plant non-specific lipid-transfer proteins transfer phospholipids as well as galactolipids across membranes. May play a role in wax or cutin deposition in the cell walls of expanding epidermal cells and certain secretory tissues. This chain is Probable non-specific lipid-transfer protein 3 (LTP3), found in Triticum aestivum (Wheat).